The sequence spans 997 residues: RNA2 polyprotein (997 aa).

Residues 370–376 form an involved in tubule formation by the movement protein region; the sequence is KVVSVKG.

As to quaternary structure, interacts with the large capsid protein. Interacts with the small capsid protein. Homomultimer; assembles as pentons. Interacts with the movement protein (via C-terminus). In terms of assembly, interacts (via C-terminus) with the large capsid protein. In terms of processing, specific enzymatic cleavages by picornain 3C-like protease in vivo yield mature proteins.

The protein localises to the host cell junction. It localises to the host plasmodesma. Its subcellular location is the virion. Its function is as follows. Responsible for viral RNA2 accumulation. May function by recruiting the RNA1-encoded polyprotein that contains the replication protein to RNA2 and enable its replication. In terms of biological role, transports the viral genome to neighboring plant cells directly through plasmosdesmata, without any budding. The movement protein allows efficient cell to cell propagation, by bypassing the host cell wall barrier. Acts by forming a tubular structure at the host plasmodesmata, enlarging it enough to allow free passage of virion capsids. Binds to GTP and to single-stranded RNA and single-stranded DNA in a non-sequence-specific manner. Functionally, together with the small capsid protein, forms an icosahedral capsid (T=3) enclosing the viral positive strand RNA genome, with a diameter of approximately 300 Angstroms. The capsid is formed from 60 copies each of the large and the small capsid protein. The large capsid protein interacts with the viral RNA. Together with the large capsid protein, forms an icosahedral capsid (T=3) enclosing the viral positive strand RNA genome, with a diameter of approximately 300 Angstroms. The capsid is formed from 60 copies each of the large and the small capsid protein. The small capsid protein forms the turrets at the fivefold axes of the viral particle. Also seems to act as suppressor of post-transcriptional gene silencing (PTGS), a mechanism of plant viral defense that limits the accumulation of viral RNAs. This Andean potato mottle virus (APMV) protein is RNA2 polyprotein.